The sequence spans 131 residues: Small ribosomal subunit protein uS11 (131 aa).

It belongs to the universal ribosomal protein uS11 family. In terms of assembly, part of the 30S ribosomal subunit. Interacts with proteins S7 and S18. Binds to IF-3.

In terms of biological role, located on the platform of the 30S subunit, it bridges several disparate RNA helices of the 16S rRNA. Forms part of the Shine-Dalgarno cleft in the 70S ribosome. The protein is Small ribosomal subunit protein uS11 of Helicobacter pylori (strain G27).